The primary structure comprises 110 residues: NADH-quinone oxidoreductase subunit K (110 aa).

Transmembrane regions (helical) follow at residues 7-27 (LGSY…GVFV), 31-51 (IIAI…NFIA), and 73-93 (IFVI…VIAI).

Belongs to the complex I subunit 4L family. In terms of assembly, NDH-1 is composed of 14 different subunits. Subunits NuoA, H, J, K, L, M, N constitute the membrane sector of the complex.

The protein localises to the cell membrane. The catalysed reaction is a quinone + NADH + 5 H(+)(in) = a quinol + NAD(+) + 4 H(+)(out). In terms of biological role, NDH-1 shuttles electrons from NADH, via FMN and iron-sulfur (Fe-S) centers, to quinones in the respiratory chain. The immediate electron acceptor for the enzyme in this species is believed to be a menaquinone. Couples the redox reaction to proton translocation (for every two electrons transferred, four hydrogen ions are translocated across the cytoplasmic membrane), and thus conserves the redox energy in a proton gradient. The chain is NADH-quinone oxidoreductase subunit K from Desulfitobacterium hafniense (strain DSM 10664 / DCB-2).